The sequence spans 487 residues: Serine/threonine-protein kinase 4 (487 aa).

At Met-1 the chain carries N-acetylmethionine. Position 3 is a phosphothreonine (Thr-3). In terms of domain architecture, Protein kinase spans Phe-30–Val-281. Residues Leu-36 to Val-44 and Lys-59 contribute to the ATP site. The Proton acceptor role is filled by Asp-149. Thr-183 is modified (phosphothreonine; by autocatalysis). Phosphoserine is present on residues Ser-265 and Ser-320. Residues Ile-289–Ser-327 adopt a coiled-coil conformation. Residues Gln-305–Arg-332 form a disordered region. Acidic residues predominate over residues Asp-313 to Asp-326. Residues Thr-340 and Thr-367 each carry the phosphothreonine modification. Phosphothreonine; by PKB/AKT1 is present on Thr-387. Ser-410 and Ser-414 each carry phosphoserine. A Phosphotyrosine modification is found at Tyr-433. The 48-residue stretch at Tyr-433–Lys-480 folds into the SARAH domain.

It belongs to the protein kinase superfamily. STE Ser/Thr protein kinase family. STE20 subfamily. In terms of assembly, homodimer; mediated via the coiled-coil region. Interacts with NORE1, which inhibits autoactivation. Interacts with and stabilizes SAV1. Interacts with RASSF1. Interacts with FOXO3. Interacts with RASSF2 (via SARAH domain). Interacts with AR, PKB/AKT1, TNNI3 and SIRT1. Interacts with DLG5 (via PDZ domain 3). Interacts with MARK3 and SCRIB in the presence of DLG5. Mg(2+) is required as a cofactor. Autophosphorylated on serine and threonine residues. Phosphorylation at Thr-387 by PKB/AKT1, leads to inhibition of its: kinase activity, nuclear translocation and autophosphorylation at Thr-183. It also diminishes its cleavage by caspases and its ability to phosphorylate FOXO3. Post-translationally, proteolytically cleaved by caspase-3 during apoptosis at Asp-326 and Asp-349 resulting in a 37 kDa or a 39 kDa subunit respectively. The 39 kDa subunit is further cleaved into the 37 kDa form. Proteolytic cleavage results in kinase activation and nuclear translocation of the truncated form (MST1/N). It is less likely that cleavage at Asp-349 is a prerequisite for activation as this site is not conserved in the murine ortholog.

It is found in the cytoplasm. The protein localises to the nucleus. It carries out the reaction L-seryl-[protein] + ATP = O-phospho-L-seryl-[protein] + ADP + H(+). The catalysed reaction is L-threonyl-[protein] + ATP = O-phospho-L-threonyl-[protein] + ADP + H(+). Inhibited by the C-terminal non-catalytic region. Activated by caspase-cleavage. Full activation also requires homodimerization and autophosphorylation of Thr-183. Activated by RASSF1 which acts by preventing its dephosphorylation. Its function is as follows. Stress-activated, pro-apoptotic kinase which, following caspase-cleavage, enters the nucleus and induces chromatin condensation followed by internucleosomal DNA fragmentation. Key component of the Hippo signaling pathway which plays a pivotal role in organ size control and tumor suppression by restricting proliferation and promoting apoptosis. The core of this pathway is composed of a kinase cascade wherein STK3/MST2 and STK4/MST1, in complex with its regulatory protein SAV1, phosphorylates and activates LATS1/2 in complex with its regulatory protein MOB1, which in turn phosphorylates and inactivates YAP1 oncoprotein and WWTR1/TAZ. Phosphorylation of YAP1 by LATS2 inhibits its translocation into the nucleus to regulate cellular genes important for cell proliferation, cell death, and cell migration. STK3/MST2 and STK4/MST1 are required to repress proliferation of mature hepatocytes, to prevent activation of facultative adult liver stem cells (oval cells), and to inhibit tumor formation. Phosphorylates 'Ser-14' of histone H2B (H2BS14ph) during apoptosis. Phosphorylates FOXO3 upon oxidative stress, which results in its nuclear translocation and cell death initiation. Phosphorylates MOBKL1A, MOBKL1B and RASSF2. Phosphorylates TNNI3 (cardiac Tn-I) and alters its binding affinity to TNNC1 (cardiac Tn-C) and TNNT2 (cardiac Tn-T). Phosphorylates FOXO1 on 'Ser-212' and regulates its activation and stimulates transcription of PMAIP1 in a FOXO1-dependent manner. Phosphorylates SIRT1 and inhibits SIRT1-mediated p53/TP53 deacetylation, thereby promoting p53/TP53 dependent transcription and apoptosis upon DNA damage. Acts as an inhibitor of PKB/AKT1. Phosphorylates AR on 'Ser-650' and suppresses its activity by intersecting with PKB/AKT1 signaling and antagonizing formation of AR-chromatin complexes. The protein is Serine/threonine-protein kinase 4 (STK4) of Bos taurus (Bovine).